The chain runs to 180 residues: Small ribosomal subunit protein uS5 (180 aa).

One can recognise an S5 DRBM domain in the interval 24–87; it reads MIEKLVAVNR…EQARKNLATV (64 aa).

This sequence belongs to the universal ribosomal protein uS5 family. In terms of assembly, part of the 30S ribosomal subunit. Contacts proteins S4 and S8.

With S4 and S12 plays an important role in translational accuracy. In terms of biological role, located at the back of the 30S subunit body where it stabilizes the conformation of the head with respect to the body. The chain is Small ribosomal subunit protein uS5 from Xanthomonas axonopodis pv. citri (strain 306).